Reading from the N-terminus, the 38-residue chain is Small toxic protein BsrG (38 aa).

The chain crosses the membrane as a helical span at residues 11–31; it reads INFGGLILNTVLLIFNIMMIV.

It is found in the cell membrane. Functionally, toxic component of a type I toxin-antitoxin (TA) system; expression in the absence of cognate antisense antitoxin SR4 RNA leads to cell lysis. Induced expression causes membrane invaginations that dislocate the cell wall synthesis machinery, leading to eventual death. Unlike many type I TA systems it does not form pores. Base pairing occurs between the 3' UTRs of bsrG mRNA and SR4 RNA, which leads to initiation of degradation by RNase III (rnc) followed by the action of RNase Y (rny) and RNase R (rnr). Not toxic when expressed in E.coli. When induced during logarithmic growth it only slowly exerts its toxic effect. Expression during log growth leads to significant disturbances of cell envelope biosynthesis and cell morphology, causing cell membrane invaginations and delocalization of cell division and cell wall synthesis machinery. Cell lysis depends on mreB, lytC and lytD, suggesting expression of bsrG triggers autolysis rather than disintegration of the membrane. Additionally expression of bsrG also inhibits transcription. This is Small toxic protein BsrG from Bacillus subtilis (strain 168).